We begin with the raw amino-acid sequence, 225 residues long: Cytidylate kinase (225 aa).

An ATP-binding site is contributed by 10-18 (GPASSGKST).

This sequence belongs to the cytidylate kinase family. Type 1 subfamily.

Its subcellular location is the cytoplasm. The catalysed reaction is CMP + ATP = CDP + ADP. It carries out the reaction dCMP + ATP = dCDP + ADP. The chain is Cytidylate kinase from Streptococcus sanguinis (strain SK36).